Reading from the N-terminus, the 72-residue chain is Translation initiation factor IF-1 (72 aa).

Positions 1–72 (MAKEDVIEIE…TRGRITYRFK (72 aa)) constitute an S1-like domain.

The protein belongs to the IF-1 family. Component of the 30S ribosomal translation pre-initiation complex which assembles on the 30S ribosome in the order IF-2 and IF-3, IF-1 and N-formylmethionyl-tRNA(fMet); mRNA recruitment can occur at any time during PIC assembly.

Its subcellular location is the cytoplasm. Functionally, one of the essential components for the initiation of protein synthesis. Stabilizes the binding of IF-2 and IF-3 on the 30S subunit to which N-formylmethionyl-tRNA(fMet) subsequently binds. Helps modulate mRNA selection, yielding the 30S pre-initiation complex (PIC). Upon addition of the 50S ribosomal subunit IF-1, IF-2 and IF-3 are released leaving the mature 70S translation initiation complex. This chain is Translation initiation factor IF-1, found in Streptococcus suis (strain 05ZYH33).